Consider the following 262-residue polypeptide: Ribosomal RNA small subunit methyltransferase A (262 aa).

The S-adenosyl-L-methionine site is built by histidine 16, leucine 18, glycine 43, glutamate 64, aspartate 89, and asparagine 109.

It belongs to the class I-like SAM-binding methyltransferase superfamily. rRNA adenine N(6)-methyltransferase family. RsmA subfamily.

The protein resides in the cytoplasm. It carries out the reaction adenosine(1518)/adenosine(1519) in 16S rRNA + 4 S-adenosyl-L-methionine = N(6)-dimethyladenosine(1518)/N(6)-dimethyladenosine(1519) in 16S rRNA + 4 S-adenosyl-L-homocysteine + 4 H(+). Its function is as follows. Specifically dimethylates two adjacent adenosines (A1518 and A1519) in the loop of a conserved hairpin near the 3'-end of 16S rRNA in the 30S particle. May play a critical role in biogenesis of 30S subunits. The polypeptide is Ribosomal RNA small subunit methyltransferase A (Xanthomonas campestris pv. campestris (strain B100)).